The primary structure comprises 143 residues: Transcriptional regulator MraZ (143 aa).

2 consecutive SpoVT-AbrB domains span residues 5–47 (EYHH…PIEE) and 76–119 (AMES…SAER).

The protein belongs to the MraZ family. As to quaternary structure, forms oligomers.

Its subcellular location is the cytoplasm. The protein localises to the nucleoid. In Lactobacillus gasseri (strain ATCC 33323 / DSM 20243 / BCRC 14619 / CIP 102991 / JCM 1131 / KCTC 3163 / NCIMB 11718 / NCTC 13722 / AM63), this protein is Transcriptional regulator MraZ.